The sequence spans 308 residues: HTH-type transcriptional activator AllS (308 aa).

In terms of domain architecture, HTH lysR-type spans 2 to 59 (FDPETLRTFISVAETGSFSKAAERLCKTTATTSYRIKLLEENTGVGLFFRTTRSVSLT). A DNA-binding region (H-T-H motif) is located at residues 19-38 (FSKAAERLCKTTATTSYRIK).

The protein belongs to the LysR transcriptional regulatory family.

Positive regulator essential for the expression of allD operon. Binds to the allD promoter. The polypeptide is HTH-type transcriptional activator AllS (allS) (Salmonella typhi).